A 424-amino-acid polypeptide reads, in one-letter code: CinA-like protein (424 aa).

It belongs to the CinA family.

This Shewanella frigidimarina (strain NCIMB 400) protein is CinA-like protein.